A 406-amino-acid chain; its full sequence is Phosphorylase b kinase gamma catalytic chain, liver/testis isoform (406 aa).

The Protein kinase domain occupies 24–291 (YDPKDVIGRG…AEQALQHPFF (268 aa)). Residues 30–38 (IGRGVSSVV) and Lys53 contribute to the ATP site. Asp153 (proton acceptor) is an active-site residue. The tract at residues 306–330 (QRFRVAVWTVLAAGRVALSAHRIRP) is calmodulin-binding (domain-N). Residues 346-370 (VRRLIDNCAFRLYGHWVKKGEQQNR) form a calmodulin-binding (domain-C) region.

The protein belongs to the protein kinase superfamily. CAMK Ser/Thr protein kinase family. As to quaternary structure, hexadecamer of 4 heterotetramers, each composed of alpha, beta, gamma, and delta subunits. Alpha (PHKA1 or PHKA2) and beta (PHKB) are regulatory subunits, gamma (PHKG1 or PHKG2) is the catalytic subunit, and delta is calmodulin.

The enzyme catalyses 2 ATP + phosphorylase b = 2 ADP + phosphorylase a.. Functionally, catalytic subunit of the phosphorylase b kinase (PHK), which mediates the neural and hormonal regulation of glycogen breakdown (glycogenolysis) by phosphorylating and thereby activating glycogen phosphorylase. May regulate glycogeneolysis in the testis. In vitro, phosphorylates PYGM. The chain is Phosphorylase b kinase gamma catalytic chain, liver/testis isoform (PHKG2) from Bos taurus (Bovine).